The following is a 204-amino-acid chain: Large ribosomal subunit protein bL9 (204 aa).

The disordered stretch occupies residues 180-204 (DDIGGAASDDEGDAPAAAADEEESK). The span at 187-204 (SDDEGDAPAAAADEEESK) shows a compositional bias: acidic residues.

This sequence belongs to the bacterial ribosomal protein bL9 family.

Its function is as follows. Binds to the 23S rRNA. This Ruegeria sp. (strain TM1040) (Silicibacter sp.) protein is Large ribosomal subunit protein bL9.